Reading from the N-terminus, the 945-residue chain is Leucine--tRNA ligase (945 aa).

A 'HIGH' region motif is present at residues 43–53 (PYPNGAIHIGH). The 'KMSKS' region motif lies at 638 to 642 (KMSKS). K641 contacts ATP.

It belongs to the class-I aminoacyl-tRNA synthetase family.

It localises to the cytoplasm. It carries out the reaction tRNA(Leu) + L-leucine + ATP = L-leucyl-tRNA(Leu) + AMP + diphosphate. This Pyrobaculum aerophilum (strain ATCC 51768 / DSM 7523 / JCM 9630 / CIP 104966 / NBRC 100827 / IM2) protein is Leucine--tRNA ligase.